We begin with the raw amino-acid sequence, 362 residues long: Peptide chain release factor 1 (362 aa).

At Gln237 the chain carries N5-methylglutamine.

This sequence belongs to the prokaryotic/mitochondrial release factor family. Methylated by PrmC. Methylation increases the termination efficiency of RF1.

It localises to the cytoplasm. Peptide chain release factor 1 directs the termination of translation in response to the peptide chain termination codons UAG and UAA. The polypeptide is Peptide chain release factor 1 (Legionella pneumophila (strain Paris)).